Consider the following 264-residue polypeptide: Type III pantothenate kinase (264 aa).

6–13 (DIGNTQTV) contacts ATP. Residues tyrosine 100 and 107–110 (GADR) each bind substrate. Aspartate 109 functions as the Proton acceptor in the catalytic mechanism. Aspartate 129 serves as a coordination point for K(+). Threonine 132 is an ATP binding site. Residue threonine 185 coordinates substrate.

The protein belongs to the type III pantothenate kinase family. Homodimer. It depends on NH4(+) as a cofactor. K(+) is required as a cofactor.

The protein localises to the cytoplasm. It carries out the reaction (R)-pantothenate + ATP = (R)-4'-phosphopantothenate + ADP + H(+). Its pathway is cofactor biosynthesis; coenzyme A biosynthesis; CoA from (R)-pantothenate: step 1/5. Its function is as follows. Catalyzes the phosphorylation of pantothenate (Pan), the first step in CoA biosynthesis. The protein is Type III pantothenate kinase of Rubrobacter xylanophilus (strain DSM 9941 / JCM 11954 / NBRC 16129 / PRD-1).